The following is a 430-amino-acid chain: Adenylosuccinate synthetase (430 aa).

GTP contacts are provided by residues 12 to 18 (GDEGKGK) and 40 to 42 (GHT). The active-site Proton acceptor is Asp-13. Mg(2+)-binding residues include Asp-13 and Gly-40. IMP is bound by residues 13–16 (DEGK), 38–41 (NAGH), Thr-128, Arg-142, Gln-223, Thr-238, and Arg-302. Catalysis depends on His-41, which acts as the Proton donor. Residues 330–332 (SID) and 412–414 (SVG) each bind GTP.

It belongs to the adenylosuccinate synthetase family. Homodimer. Requires Mg(2+) as cofactor.

It is found in the cytoplasm. It catalyses the reaction IMP + L-aspartate + GTP = N(6)-(1,2-dicarboxyethyl)-AMP + GDP + phosphate + 2 H(+). The protein operates within purine metabolism; AMP biosynthesis via de novo pathway; AMP from IMP: step 1/2. Functionally, plays an important role in the de novo pathway of purine nucleotide biosynthesis. Catalyzes the first committed step in the biosynthesis of AMP from IMP. This Bacillus subtilis (strain 168) protein is Adenylosuccinate synthetase.